Here is a 497-residue protein sequence, read N- to C-terminus: Trichoplein keratin filament-binding protein (497 aa).

3 coiled-coil regions span residues histidine 67–glutamate 140, alanine 166–arginine 271, and methionine 327–methionine 479. Residues lysine 72–glutamate 457 are interaction with keratin proteins. The segment at threonine 167–asparagine 188 is disordered. Residues glutamine 168–asparagine 188 show a composition bias toward basic and acidic residues. Residues arginine 258–glutamate 424 form a trichohyalin/plectin homology domain region. Residues alanine 441–aspartate 497 form a disordered region. Residues glutamine 444–glutamine 453 show a composition bias toward basic and acidic residues. The span at leucine 488–aspartate 497 shows a compositional bias: basic residues.

The protein belongs to the TCHP family. Interacts specifically with keratin proteins including, KRT5, KRT6A, KRT8, KRT14, KRT16 and KRT18. Interacts with KCTD17. In terms of processing, ubiquitinated. Ubiquitination by the BCR(KCTD17) E3 ubiquitin ligase complex results in proteasomal degradation, and induces ciliogenesis. In terms of tissue distribution, expressed in all tissues examined, including brain, liver, small intestine, large intestine, lung and heart. Found concentrated in tubular structures within hepatocytes, and in the apical cortical region and desmosomes of the apical junctional domain in enterocytes of the small intestine. In the hair follicle, localized at the outer root sheath. Also expressed in blood vessels (at protein level).

It localises to the cytoplasm. It is found in the cytoskeleton. Its subcellular location is the cell membrane. The protein localises to the mitochondrion. The protein resides in the microtubule organizing center. It localises to the centrosome. Functionally, tumor suppressor which has the ability to inhibit cell growth and be pro-apoptotic during cell stress. May act as a 'capping' or 'branching' protein for keratin filaments in the cell periphery. May regulate K8/K18 filament and desmosome organization mainly at the apical or peripheral regions of simple epithelial cells. Is a negative regulator of ciliogenesis. The chain is Trichoplein keratin filament-binding protein from Mus musculus (Mouse).